Consider the following 450-residue polypeptide: Glucose-6-phosphate isomerase (450 aa).

The Proton donor role is filled by glutamate 291. Active-site residues include histidine 312 and lysine 426.

It belongs to the GPI family.

It localises to the cytoplasm. It catalyses the reaction alpha-D-glucose 6-phosphate = beta-D-fructose 6-phosphate. The protein operates within carbohydrate biosynthesis; gluconeogenesis. It functions in the pathway carbohydrate degradation; glycolysis; D-glyceraldehyde 3-phosphate and glycerone phosphate from D-glucose: step 2/4. Its function is as follows. Catalyzes the reversible isomerization of glucose-6-phosphate to fructose-6-phosphate. The polypeptide is Glucose-6-phosphate isomerase (Clostridium botulinum (strain Loch Maree / Type A3)).